We begin with the raw amino-acid sequence, 118 residues long: Small ribosomal subunit protein uS13 (118 aa).

The tract at residues 94–118 (GLPVRGQRTKTNARTRKGPCKPIKK) is disordered.

This sequence belongs to the universal ribosomal protein uS13 family. In terms of assembly, part of the 30S ribosomal subunit. Forms a loose heterodimer with protein S19. Forms two bridges to the 50S subunit in the 70S ribosome.

In terms of biological role, located at the top of the head of the 30S subunit, it contacts several helices of the 16S rRNA. In the 70S ribosome it contacts the 23S rRNA (bridge B1a) and protein L5 of the 50S subunit (bridge B1b), connecting the 2 subunits; these bridges are implicated in subunit movement. Contacts the tRNAs in the A and P-sites. This Salmonella typhi protein is Small ribosomal subunit protein uS13.